The sequence spans 48 residues: Cuticle protein 5.1 (48 aa).

Component of the cuticle of migratory locust which contains more than 100 different structural proteins. The polypeptide is Cuticle protein 5.1 (Locusta migratoria (Migratory locust)).